The primary structure comprises 247 residues: Chymase (247 aa).

The first 19 residues, 1 to 19, serve as a signal peptide directing secretion; it reads MLLLPLPLLLLFLCSRAEA. A propeptide spans 20 to 21 (activation peptide); the sequence is GE. Residues 22 to 245 form the Peptidase S1 domain; sequence IIGGTECKPH…YRPWINKILQ (224 aa). Cys-51 and Cys-67 are disulfide-bonded. His-66 (charge relay system) is an active-site residue. Asn-80 and Asn-103 each carry an N-linked (GlcNAc...) asparagine glycan. Asp-110 (charge relay system) is an active-site residue. 2 cysteine pairs are disulfide-bonded: Cys-144–Cys-209 and Cys-175–Cys-188. The active-site Charge relay system is Ser-203.

Belongs to the peptidase S1 family. Granzyme subfamily.

The protein localises to the secreted. It localises to the cytoplasmic granule. The enzyme catalyses Preferential cleavage: Phe-|-Xaa &gt; Tyr-|-Xaa &gt; Trp-|-Xaa &gt; Leu-|-Xaa.. Functionally, major secreted protease of mast cells with suspected roles in vasoactive peptide generation, extracellular matrix degradation, and regulation of gland secretion. The polypeptide is Chymase (CMA1) (Papio hamadryas (Hamadryas baboon)).